A 247-amino-acid chain; its full sequence is Cell division protein ZapD (247 aa).

This sequence belongs to the ZapD family. In terms of assembly, interacts with FtsZ.

Its subcellular location is the cytoplasm. Its function is as follows. Cell division factor that enhances FtsZ-ring assembly. Directly interacts with FtsZ and promotes bundling of FtsZ protofilaments, with a reduction in FtsZ GTPase activity. This Escherichia coli O157:H7 protein is Cell division protein ZapD.